The chain runs to 194 residues: dTTP/UTP pyrophosphatase (194 aa).

The Proton acceptor role is filled by aspartate 73.

Belongs to the Maf family. YhdE subfamily. A divalent metal cation serves as cofactor.

The protein resides in the cytoplasm. It carries out the reaction dTTP + H2O = dTMP + diphosphate + H(+). The enzyme catalyses UTP + H2O = UMP + diphosphate + H(+). Functionally, nucleoside triphosphate pyrophosphatase that hydrolyzes dTTP and UTP. May have a dual role in cell division arrest and in preventing the incorporation of modified nucleotides into cellular nucleic acids. In Geotalea uraniireducens (strain Rf4) (Geobacter uraniireducens), this protein is dTTP/UTP pyrophosphatase.